The chain runs to 140 residues: Small ribosomal subunit protein uS11 (140 aa).

Residues 116–140 (GRVEDVTPIPHDGTRPKGGRRGRRV) are disordered.

This sequence belongs to the universal ribosomal protein uS11 family. Part of the 30S ribosomal subunit.

Its function is as follows. Located on the platform of the 30S subunit. The sequence is that of Small ribosomal subunit protein uS11 from Thermococcus kodakarensis (strain ATCC BAA-918 / JCM 12380 / KOD1) (Pyrococcus kodakaraensis (strain KOD1)).